A 485-amino-acid polypeptide reads, in one-letter code: UDP-N-acetylmuramate--L-alanine ligase (485 aa).

127 to 133 (GTHGKTT) is a binding site for ATP.

This sequence belongs to the MurCDEF family.

It is found in the cytoplasm. The catalysed reaction is UDP-N-acetyl-alpha-D-muramate + L-alanine + ATP = UDP-N-acetyl-alpha-D-muramoyl-L-alanine + ADP + phosphate + H(+). The protein operates within cell wall biogenesis; peptidoglycan biosynthesis. In terms of biological role, cell wall formation. This Shewanella frigidimarina (strain NCIMB 400) protein is UDP-N-acetylmuramate--L-alanine ligase.